The primary structure comprises 234 residues: Triosephosphate isomerase (234 aa).

8–10 (NFK) serves as a coordination point for substrate. His90 serves as the catalytic Electrophile. The active-site Proton acceptor is the Glu159. Gly165 and Ser197 together coordinate substrate.

It belongs to the triosephosphate isomerase family. In terms of assembly, homodimer.

It localises to the cytoplasm. The enzyme catalyses D-glyceraldehyde 3-phosphate = dihydroxyacetone phosphate. It participates in carbohydrate biosynthesis; gluconeogenesis. It functions in the pathway carbohydrate degradation; glycolysis; D-glyceraldehyde 3-phosphate from glycerone phosphate: step 1/1. In terms of biological role, involved in the gluconeogenesis. Catalyzes stereospecifically the conversion of dihydroxyacetone phosphate (DHAP) to D-glyceraldehyde-3-phosphate (G3P). This is Triosephosphate isomerase from Helicobacter pylori (strain P12).